The chain runs to 228 residues: E3 ubiquitin-protein ligase RNF114 (228 aa).

Residues 29 to 68 form an RING-type zinc finger; it reads CPVCLEVYEKPVQVPCGHVFCSACLQECLKPKKPVCGVCR. Residues Cys-91 and Cys-94 each contribute to the Zn(2+) site. A C2HC RNF-type zinc finger spans residues 91-110; that stretch reads CHGCRKNFFLSKIRAHVATC. Residue Lys-102 is modified to N6-acetyllysine. Positions 106 and 110 each coordinate Zn(2+). An N6-acetyllysine modification is found at Lys-112.

Interacts with XAF1, the interaction increases XAF1 stability and proapoptotic effects, and may regulate IFN signaling. Autoubiquitinated. Polyubiquitinated in the presence of E2 enzymes UBE2D1, UBE2D2 and UBE2D3, but only monoubiquitinated in the presence of UBE2E1.

The protein resides in the cytoplasm. It localises to the nucleus. The enzyme catalyses S-ubiquitinyl-[E2 ubiquitin-conjugating enzyme]-L-cysteine + [acceptor protein]-L-lysine = [E2 ubiquitin-conjugating enzyme]-L-cysteine + N(6)-ubiquitinyl-[acceptor protein]-L-lysine.. The protein operates within protein modification; protein ubiquitination. Its function is as follows. E3 ubiquitin-protein ligase that promotes the ubiquitination of various substrates. In turn, participates in the regulation of many biological processes including cell cycle, apoptosis, osteoclastogenesis as well as innate or adaptive immunity. Acts as negative regulator of NF-kappa-B-dependent transcription by promoting the ubiquitination and stabilization of the NF-kappa-B inhibitor TNFAIP3. May promote the ubiquitination of TRAF6 as well. Also acts as a negative regulator of T-cell activation. Inhibits cellular dsRNA responses and interferon production by targeting MAVS component for proteasomal degradation. Ubiquitinates the CDK inhibitor CDKN1A leading to its degradationand probably also CDKN1B and CDKN1C. This activity stimulates cell cycle G1-to-S phase transition and suppresses cellular senescence. May play a role in spermatogenesis. Inhibits classical swine fever virus replication by mediating 'K27'-linked ubiquitination of viral NS4B and inducing its degradation via the proteasome. The polypeptide is E3 ubiquitin-protein ligase RNF114 (RNF114) (Sus scrofa (Pig)).